The chain runs to 887 residues: Alanine--tRNA ligase (887 aa).

H579, H583, C681, and H685 together coordinate Zn(2+).

The protein belongs to the class-II aminoacyl-tRNA synthetase family. It depends on Zn(2+) as a cofactor.

The protein localises to the cytoplasm. It catalyses the reaction tRNA(Ala) + L-alanine + ATP = L-alanyl-tRNA(Ala) + AMP + diphosphate. Its function is as follows. Catalyzes the attachment of alanine to tRNA(Ala) in a two-step reaction: alanine is first activated by ATP to form Ala-AMP and then transferred to the acceptor end of tRNA(Ala). Also edits incorrectly charged Ser-tRNA(Ala) and Gly-tRNA(Ala) via its editing domain. In Flavobacterium psychrophilum (strain ATCC 49511 / DSM 21280 / CIP 103535 / JIP02/86), this protein is Alanine--tRNA ligase.